Here is a 71-residue protein sequence, read N- to C-terminus: Omega-conotoxin-like Ac6.4 (71 aa).

The signal sequence occupies residues 1–22 (MKLTCVVIVAVLLLTACQLLTA). Positions 23 to 45 (DDSRGTQKHRALRSDTKLSMSTR) are excised as a propeptide. 3 disulfides stabilise this stretch: C46–C61, C53–C65, and C60–C70. At C70 the chain carries Cysteine amide.

It belongs to the conotoxin O1 superfamily. As to expression, expressed by the venom duct.

It is found in the secreted. Its function is as follows. Omega-conotoxins act at presynaptic membranes, they bind and block voltage-gated calcium channels (Cav). This is Omega-conotoxin-like Ac6.4 from Conus achatinus (Little frog cone).